The chain runs to 381 residues: MTLRYLTAGESHGPALVAIAEGFPAGLAVDFEAVDRDLRRRQKGYGRGGRMKIETDAAQFLAGLRGGLTTGAPIALAVWNKDHENWKDLVSPYARGGKKFTQVRPGHADLAGALKYGLDDARDVLERASARSTAVTVALGALAKALLSTLGVEVCSRVVAIGPREIRPDAPPTPAQRDAIEASDLHVDDEALAAEWRALIDAEKARGGSIGGAFDVYATGLPIGVGSHVHPDRRLDARLAGALCGVQAIRAVEIGDGTQVGRPGYEFHDAIHHDPARGFWRDTNRAGGLEGGMTDGMPLRVRAYMKPIPTMLHPLATVDLATRAATQARYERSDVCAVPAAAVVGEAVVAWELANALLEKFGGDAVEDVRRAVEAYAARIR.

Residues Arg41 and Arg47 each contribute to the NADP(+) site. FMN-binding positions include 127–129, 247–248, Gly291, 306–310, and Arg332; these read RAS, QA, and KPIPT.

Belongs to the chorismate synthase family. As to quaternary structure, homotetramer. The cofactor is FMNH2.

The catalysed reaction is 5-O-(1-carboxyvinyl)-3-phosphoshikimate = chorismate + phosphate. It participates in metabolic intermediate biosynthesis; chorismate biosynthesis; chorismate from D-erythrose 4-phosphate and phosphoenolpyruvate: step 7/7. Its function is as follows. Catalyzes the anti-1,4-elimination of the C-3 phosphate and the C-6 proR hydrogen from 5-enolpyruvylshikimate-3-phosphate (EPSP) to yield chorismate, which is the branch point compound that serves as the starting substrate for the three terminal pathways of aromatic amino acid biosynthesis. This reaction introduces a second double bond into the aromatic ring system. The protein is Chorismate synthase of Anaeromyxobacter dehalogenans (strain 2CP-1 / ATCC BAA-258).